A 679-amino-acid chain; its full sequence is DNA ligase (679 aa).

NAD(+) is bound by residues 41–45 (DSVYD), 90–91 (SL), and Glu120. Lys122 (N6-AMP-lysine intermediate) is an active-site residue. Arg143, Glu177, Lys293, and Lys317 together coordinate NAD(+). Zn(2+)-binding residues include Cys411, Cys414, Cys429, and Cys434. Residues 597–679 (DSNSWFAGKR…SETMREDAQA (83 aa)) form the BRCT domain.

Belongs to the NAD-dependent DNA ligase family. LigA subfamily. The cofactor is Mg(2+). Mn(2+) is required as a cofactor.

The enzyme catalyses NAD(+) + (deoxyribonucleotide)n-3'-hydroxyl + 5'-phospho-(deoxyribonucleotide)m = (deoxyribonucleotide)n+m + AMP + beta-nicotinamide D-nucleotide.. Its function is as follows. DNA ligase that catalyzes the formation of phosphodiester linkages between 5'-phosphoryl and 3'-hydroxyl groups in double-stranded DNA using NAD as a coenzyme and as the energy source for the reaction. It is essential for DNA replication and repair of damaged DNA. This Lactiplantibacillus plantarum (strain ATCC BAA-793 / NCIMB 8826 / WCFS1) (Lactobacillus plantarum) protein is DNA ligase.